A 504-amino-acid polypeptide reads, in one-letter code: Beta-xylosidase (504 aa).

The active-site Proton donor is Glu-160. Catalysis depends on Glu-280, which acts as the Nucleophile.

The protein belongs to the glycosyl hydrolase 39 family.

It carries out the reaction Hydrolysis of (1-&gt;4)-beta-D-xylans, to remove successive D-xylose residues from the non-reducing termini.. The polypeptide is Beta-xylosidase (xynB) (Geobacillus stearothermophilus (Bacillus stearothermophilus)).